We begin with the raw amino-acid sequence, 614 residues long: uncharacterized protein (614 aa).

This is an uncharacterized protein from Lactococcus lactis subsp. cremoris (strain MG1363).